We begin with the raw amino-acid sequence, 217 residues long: Homeobox protein Hox-B7 (217 aa).

Positions 126–131 (IYPWMR) match the Antp-type hexapeptide motif. The segment at residues 137 to 196 (RKRGRQTYTRYQTLELEKEFHYNRYLTRRRRIEIAHTLCLTERQIKIWFQNRRMKWKKEN) is a DNA-binding region (homeobox). The tract at residues 192-217 (WKKENKTSGPGTTGQDKAEAEEEEEE) is disordered.

Belongs to the Antp homeobox family. Forms a DNA-binding heterodimer with transcription factor PBX1.

The protein resides in the nucleus. In terms of biological role, sequence-specific transcription factor which is part of a developmental regulatory system that provides cells with specific positional identities on the anterior-posterior axis. This chain is Homeobox protein Hox-B7 (Hoxb7), found in Mus musculus (Mouse).